A 203-amino-acid chain; its full sequence is Small ribosomal subunit protein uS4 (203 aa).

The region spanning 93–156 is the S4 RNA-binding domain; it reads RRLDNVVYRL…MKVPAILEAV (64 aa).

The protein belongs to the universal ribosomal protein uS4 family. In terms of assembly, part of the 30S ribosomal subunit. Contacts protein S5. The interaction surface between S4 and S5 is involved in control of translational fidelity.

In terms of biological role, one of the primary rRNA binding proteins, it binds directly to 16S rRNA where it nucleates assembly of the body of the 30S subunit. Its function is as follows. With S5 and S12 plays an important role in translational accuracy. This is Small ribosomal subunit protein uS4 from Streptococcus agalactiae serotype Ia (strain ATCC 27591 / A909 / CDC SS700).